The primary structure comprises 124 residues: Prefoldin subunit beta (124 aa).

Belongs to the prefoldin subunit beta family. In terms of assembly, heterohexamer of two alpha and four beta subunits.

Its subcellular location is the cytoplasm. In terms of biological role, molecular chaperone capable of stabilizing a range of proteins. Seems to fulfill an ATP-independent, HSP70-like function in archaeal de novo protein folding. This Thermoplasma volcanium (strain ATCC 51530 / DSM 4299 / JCM 9571 / NBRC 15438 / GSS1) protein is Prefoldin subunit beta (pfdB).